A 126-amino-acid chain; its full sequence is Probable glycine cleavage system H protein (126 aa).

Positions 24–106 constitute a Lipoyl-binding domain; that stretch reads VVRVGITDFA…FGDGWLLEVE (83 aa). At K65 the chain carries N6-lipoyllysine.

It belongs to the GcvH family. As to quaternary structure, the glycine cleavage system is composed of four proteins: P, T, L and H. Requires (R)-lipoate as cofactor.

Functionally, the glycine cleavage system catalyzes the degradation of glycine. The H protein shuttles the methylamine group of glycine from the P protein to the T protein. The chain is Probable glycine cleavage system H protein from Natronomonas pharaonis (strain ATCC 35678 / DSM 2160 / CIP 103997 / JCM 8858 / NBRC 14720 / NCIMB 2260 / Gabara) (Halobacterium pharaonis).